Consider the following 181-residue polypeptide: Peptide deformylase (181 aa).

The Fe cation site is built by Cys-103 and His-145. Glu-146 is a catalytic residue. His-149 serves as a coordination point for Fe cation.

The protein belongs to the polypeptide deformylase family. Requires Fe(2+) as cofactor.

The enzyme catalyses N-terminal N-formyl-L-methionyl-[peptide] + H2O = N-terminal L-methionyl-[peptide] + formate. Removes the formyl group from the N-terminal Met of newly synthesized proteins. Requires at least a dipeptide for an efficient rate of reaction. N-terminal L-methionine is a prerequisite for activity but the enzyme has broad specificity at other positions. In Orientia tsutsugamushi (strain Ikeda) (Rickettsia tsutsugamushi), this protein is Peptide deformylase.